The following is a 106-amino-acid chain: Pyrimidine/purine nucleoside phosphorylase (106 aa).

It belongs to the nucleoside phosphorylase PpnP family.

The enzyme catalyses a purine D-ribonucleoside + phosphate = a purine nucleobase + alpha-D-ribose 1-phosphate. It carries out the reaction adenosine + phosphate = alpha-D-ribose 1-phosphate + adenine. It catalyses the reaction cytidine + phosphate = cytosine + alpha-D-ribose 1-phosphate. The catalysed reaction is guanosine + phosphate = alpha-D-ribose 1-phosphate + guanine. The enzyme catalyses inosine + phosphate = alpha-D-ribose 1-phosphate + hypoxanthine. It carries out the reaction thymidine + phosphate = 2-deoxy-alpha-D-ribose 1-phosphate + thymine. It catalyses the reaction uridine + phosphate = alpha-D-ribose 1-phosphate + uracil. The catalysed reaction is xanthosine + phosphate = alpha-D-ribose 1-phosphate + xanthine. In terms of biological role, catalyzes the phosphorolysis of diverse nucleosides, yielding D-ribose 1-phosphate and the respective free bases. Can use uridine, adenosine, guanosine, cytidine, thymidine, inosine and xanthosine as substrates. Also catalyzes the reverse reactions. In Paraburkholderia xenovorans (strain LB400), this protein is Pyrimidine/purine nucleoside phosphorylase.